The chain runs to 262 residues: Phosphatidylserine decarboxylase proenzyme (262 aa).

Active-site charge relay system; for autoendoproteolytic cleavage activity residues include D86, H142, and S226. Catalysis depends on S226, which acts as the Schiff-base intermediate with substrate; via pyruvic acid; for decarboxylase activity. Position 226 is a pyruvic acid (Ser); by autocatalysis (S226).

It belongs to the phosphatidylserine decarboxylase family. PSD-B subfamily. Prokaryotic type I sub-subfamily. Heterodimer of a large membrane-associated beta subunit and a small pyruvoyl-containing alpha subunit. Pyruvate serves as cofactor. In terms of processing, is synthesized initially as an inactive proenzyme. Formation of the active enzyme involves a self-maturation process in which the active site pyruvoyl group is generated from an internal serine residue via an autocatalytic post-translational modification. Two non-identical subunits are generated from the proenzyme in this reaction, and the pyruvate is formed at the N-terminus of the alpha chain, which is derived from the carboxyl end of the proenzyme. The autoendoproteolytic cleavage occurs by a canonical serine protease mechanism, in which the side chain hydroxyl group of the serine supplies its oxygen atom to form the C-terminus of the beta chain, while the remainder of the serine residue undergoes an oxidative deamination to produce ammonia and the pyruvoyl prosthetic group on the alpha chain. During this reaction, the Ser that is part of the protease active site of the proenzyme becomes the pyruvoyl prosthetic group, which constitutes an essential element of the active site of the mature decarboxylase.

Its subcellular location is the cell membrane. The catalysed reaction is a 1,2-diacyl-sn-glycero-3-phospho-L-serine + H(+) = a 1,2-diacyl-sn-glycero-3-phosphoethanolamine + CO2. It functions in the pathway phospholipid metabolism; phosphatidylethanolamine biosynthesis; phosphatidylethanolamine from CDP-diacylglycerol: step 2/2. Its function is as follows. Catalyzes the formation of phosphatidylethanolamine (PtdEtn) from phosphatidylserine (PtdSer). The polypeptide is Phosphatidylserine decarboxylase proenzyme (Bacillus thuringiensis (strain Al Hakam)).